The following is a 36-amino-acid chain: Pancreatic polypeptide (36 aa).

Tyrosine 36 carries the tyrosine amide modification.

Belongs to the NPY family.

Its subcellular location is the secreted. In terms of biological role, hormone secreted by pancreatic cells that acts as a regulator of pancreatic and gastrointestinal functions probably by signaling through the G protein-coupled receptor NPY4R2. In Equus przewalskii (Przewalski's horse), this protein is Pancreatic polypeptide (PPY).